The sequence spans 386 residues: Methionine aminopeptidase 1 (386 aa).

N-acetylalanine is present on Ala-2. A C6H2-type zinc finger spans residues 6-59; that stretch reads TRVCETDGCSSEAKLQCPTCIKLGIQGSYFCSQECFKGSWATHKLLHKKAKDEK. Positions 9, 14, 22, 25, 36, 40, 48, and 52 each coordinate Zn(2+). His-203 provides a ligand contact to a protein. Positions 220, 231, and 294 each coordinate Zn(2+). His-301 contributes to the a protein binding site. Zn(2+) contacts are provided by Glu-327 and Glu-358.

It belongs to the peptidase M24A family. Methionine aminopeptidase type 1 subfamily. As to quaternary structure, associates with the 60S ribosomal subunit of the 80S translational complex. Zn(2+) is required as a cofactor. It depends on Co(2+) as a cofactor. Requires Mn(2+) as cofactor. Fe(2+) serves as cofactor.

The protein resides in the cytoplasm. The catalysed reaction is Release of N-terminal amino acids, preferentially methionine, from peptides and arylamides.. Cotranslationally removes the N-terminal methionine from nascent proteins. The N-terminal methionine is often cleaved when the second residue in the primary sequence is small and uncharged (Met-Ala-, Cys, Gly, Pro, Ser, Thr, or Val). The protein is Methionine aminopeptidase 1 (METAP1) of Pongo abelii (Sumatran orangutan).